The following is a 397-amino-acid chain: Elongation factor Tu (397 aa).

Residues 10–207 form the tr-type G domain; sequence LPHVNVGTIG…TLDSYIPEPV (198 aa). A G1 region spans residues 19–26; it reads GHVDHGKT. Position 19-26 (19-26) interacts with GTP; it reads GHVDHGKT. Residue Thr26 participates in Mg(2+) binding. The G2 stretch occupies residues 60–64; the sequence is GITIN. The segment at 81–84 is G3; that stretch reads DCPG. GTP-binding positions include 81 to 85 and 136 to 139; these read DCPGH and NKAD. The segment at 136–139 is G4; that stretch reads NKAD. A G5 region spans residues 174-176; the sequence is SAR.

This sequence belongs to the TRAFAC class translation factor GTPase superfamily. Classic translation factor GTPase family. EF-Tu/EF-1A subfamily. In terms of assembly, monomer.

The protein localises to the cytoplasm. The enzyme catalyses GTP + H2O = GDP + phosphate + H(+). Functionally, GTP hydrolase that promotes the GTP-dependent binding of aminoacyl-tRNA to the A-site of ribosomes during protein biosynthesis. The protein is Elongation factor Tu of Pseudomonas putida (strain ATCC 700007 / DSM 6899 / JCM 31910 / BCRC 17059 / LMG 24140 / F1).